We begin with the raw amino-acid sequence, 277 residues long: Large ribosomal subunit protein uL2 (277 aa).

Disordered regions lie at residues 32-58 (KSLT…RGGG) and 225-277 (VAMN…RRNN).

It belongs to the universal ribosomal protein uL2 family. Part of the 50S ribosomal subunit. Forms a bridge to the 30S subunit in the 70S ribosome.

Functionally, one of the primary rRNA binding proteins. Required for association of the 30S and 50S subunits to form the 70S ribosome, for tRNA binding and peptide bond formation. It has been suggested to have peptidyltransferase activity; this is somewhat controversial. Makes several contacts with the 16S rRNA in the 70S ribosome. The polypeptide is Large ribosomal subunit protein uL2 (Borrelia duttonii (strain Ly)).